Here is a 347-residue protein sequence, read N- to C-terminus: uncharacterized protein (347 aa).

The N-terminal stretch at 1-26 is a signal peptide; the sequence is MQGRVAGSCAPLGLLLVCLHLPGLFA. The segment covering 41-60 has biased composition (polar residues); it reads GTNLPQLGQPSSTGPSNSEH. Disordered stretches follow at residues 41 to 110 and 148 to 189; these read GTNL…MDSW and SGPL…AGGK. Low complexity predominate over residues 148-157; sequence SGPLPGESSP.

In terms of assembly, binds to numerous extracellular matrix proteins.

Its subcellular location is the secreted. It localises to the extracellular space. The protein resides in the extracellular matrix. This is an uncharacterized protein from Pan troglodytes (Chimpanzee).